The primary structure comprises 96 residues: Phosphoribosyl-ATP pyrophosphatase (96 aa).

This sequence belongs to the PRA-PH family.

The protein localises to the cytoplasm. The enzyme catalyses 1-(5-phospho-beta-D-ribosyl)-ATP + H2O = 1-(5-phospho-beta-D-ribosyl)-5'-AMP + diphosphate + H(+). Its pathway is amino-acid biosynthesis; L-histidine biosynthesis; L-histidine from 5-phospho-alpha-D-ribose 1-diphosphate: step 2/9. The chain is Phosphoribosyl-ATP pyrophosphatase from Methanococcus maripaludis (strain DSM 14266 / JCM 13030 / NBRC 101832 / S2 / LL).